Consider the following 693-residue polypeptide: Auxin response factor 10 (693 aa).

Residues 115–217 (FAKTLTQSDA…DLCVGIRRAK (103 aa)) constitute a DNA-binding region (TF-B3). A PB1 domain is found at 580–668 (TGHCKVFMES…DIGGDNVRKT (89 aa)).

It belongs to the ARF family. As to quaternary structure, homodimers and heterodimers. In terms of tissue distribution, expressed in the whole plant.

It localises to the nucleus. Its function is as follows. Auxin response factors (ARFs) are transcriptional factors that bind specifically to the DNA sequence 5'-TGTCTC-3' found in the auxin-responsive promoter elements (AuxREs). Could act as transcriptional activator or repressor. Formation of heterodimers with Aux/IAA proteins may alter their ability to modulate early auxin response genes expression. The sequence is that of Auxin response factor 10 (ARF10) from Arabidopsis thaliana (Mouse-ear cress).